The primary structure comprises 156 residues: 3-dehydroquinate dehydratase (156 aa).

The Proton acceptor role is filled by Tyr24. Residues Asn76, His82, and Asp89 each coordinate substrate. His102 acts as the Proton donor in catalysis. Substrate is bound by residues 103-104 (IS) and Arg113.

The protein belongs to the type-II 3-dehydroquinase family. In terms of assembly, homododecamer.

It catalyses the reaction 3-dehydroquinate = 3-dehydroshikimate + H2O. It functions in the pathway metabolic intermediate biosynthesis; chorismate biosynthesis; chorismate from D-erythrose 4-phosphate and phosphoenolpyruvate: step 3/7. Its function is as follows. Catalyzes a trans-dehydration via an enolate intermediate. This Nitrobacter winogradskyi (strain ATCC 25391 / DSM 10237 / CIP 104748 / NCIMB 11846 / Nb-255) protein is 3-dehydroquinate dehydratase.